Consider the following 67-residue polypeptide: Beta-defensin 1 (67 aa).

An N-terminal signal peptide occupies residues 1–22 (MRIHYLLFAVLFLFLMPVPGEG). Cystine bridges form between Cys33–Cys62, Cys40–Cys55, and Cys45–Cys63.

Monomer. Homodimer. As to expression, highly expressed in tongue, nasopharyngeal mucosa and skin, and to a lower extent in the Eustachian tube, lung and trachea.

The protein resides in the secreted. Its subcellular location is the membrane. Has antibacterial activity against Gram-positive bacterium S.pneumoniae Serotype 14. Is also active against Gram-negative bacteria M.catarrhalis 1857, and non-typeable H.influenzae strains 86-028NP and 1128. Has antifungal activity against C.albicans. May have a role in maintaining sterility in the middle ear. May act as a ligand for C-C chemokine receptor CCR6. Positively regulates the sperm motility and bactericidal activity in a CCR6-dependent manner. Binds to CCR6 and triggers Ca2+ mobilization in the sperm which is important for its motility. In Chinchilla lanigera (Long-tailed chinchilla), this protein is Beta-defensin 1 (DEFB1).